Reading from the N-terminus, the 247-residue chain is tRNA pseudouridine synthase A (247 aa).

The Nucleophile role is filled by Asp52. Position 111 (Tyr111) interacts with substrate.

This sequence belongs to the tRNA pseudouridine synthase TruA family. As to quaternary structure, homodimer.

It catalyses the reaction uridine(38/39/40) in tRNA = pseudouridine(38/39/40) in tRNA. Formation of pseudouridine at positions 38, 39 and 40 in the anticodon stem and loop of transfer RNAs. In Erythrobacter litoralis (strain HTCC2594), this protein is tRNA pseudouridine synthase A.